A 389-amino-acid chain; its full sequence is Lipid-A-disaccharide synthase (389 aa).

This sequence belongs to the LpxB family.

It catalyses the reaction a lipid X + a UDP-2-N,3-O-bis[(3R)-3-hydroxyacyl]-alpha-D-glucosamine = a lipid A disaccharide + UDP + H(+). Its pathway is bacterial outer membrane biogenesis; LPS lipid A biosynthesis. Functionally, condensation of UDP-2,3-diacylglucosamine and 2,3-diacylglucosamine-1-phosphate to form lipid A disaccharide, a precursor of lipid A, a phosphorylated glycolipid that anchors the lipopolysaccharide to the outer membrane of the cell. In Burkholderia cenocepacia (strain ATCC BAA-245 / DSM 16553 / LMG 16656 / NCTC 13227 / J2315 / CF5610) (Burkholderia cepacia (strain J2315)), this protein is Lipid-A-disaccharide synthase.